Reading from the N-terminus, the 465-residue chain is Lactaldehyde dehydrogenase (465 aa).

220-225 (GSVEVG) is an NAD(+) binding site. Active-site residues include glutamate 240 and cysteine 274.

The protein belongs to the aldehyde dehydrogenase family. Homotetramer.

The enzyme catalyses (S)-lactaldehyde + NAD(+) + H2O = (S)-lactate + NADH + 2 H(+). It participates in cofactor biosynthesis; coenzyme F420 biosynthesis. Its function is as follows. Involved in F420 biosynthesis through the oxidation of lactaldehyde to lactate. The polypeptide is Lactaldehyde dehydrogenase (Methanococcus maripaludis (strain C5 / ATCC BAA-1333)).